We begin with the raw amino-acid sequence, 1151 residues long: Error-prone DNA polymerase (1151 aa).

The tract at residues 1108–1151 is disordered; it reads HPVPSGDALIEPLNDDRRDHADAPAQKIRHPRNVRILPPSRDFH.

It belongs to the DNA polymerase type-C family. DnaE2 subfamily.

It is found in the cytoplasm. It carries out the reaction DNA(n) + a 2'-deoxyribonucleoside 5'-triphosphate = DNA(n+1) + diphosphate. In terms of biological role, DNA polymerase involved in damage-induced mutagenesis and translesion synthesis (TLS). It is not the major replicative DNA polymerase. This chain is Error-prone DNA polymerase, found in Bradyrhizobium diazoefficiens (strain JCM 10833 / BCRC 13528 / IAM 13628 / NBRC 14792 / USDA 110).